Reading from the N-terminus, the 350-residue chain is Ribonuclease H2 subunit B (350 aa).

Over residues 134-151 (QDYSNSSDTGENQKSNSK) the composition is skewed to polar residues. The interval 134–153 (QDYSNSSDTGENQKSNSKTN) is disordered.

It belongs to the RNase H2 subunit B family. Highly divergent. The RNase 2 complex is a heterotrimer composed of the catalytic subunit RNH201 and of the non-catalytic subunits RNH202 and RNH203.

It localises to the nucleus. Functionally, non catalytic subunit of RNase H2, an endonuclease that specifically degrades the RNA of RNA:DNA hybrids. Participates in DNA replication, possibly by mediating the removal of lagging-strand Okazaki fragment RNA primers during DNA replication. Mediates the excision of single ribonucleotides from DNA:RNA duplexes. This Saccharomyces cerevisiae (strain ATCC 204508 / S288c) (Baker's yeast) protein is Ribonuclease H2 subunit B (RNH202).